Reading from the N-terminus, the 1354-residue chain is RNA-directed RNA polymerase VP1 (1354 aa).

It catalyses the reaction RNA(n) + a ribonucleoside 5'-triphosphate = RNA(n+1) + diphosphate. RNA-directed RNA polymerase that is involved in transcription and genome replication. Following infection, it catalyzes the synthesis of fully conservative plus strands. After core assembly, which consists in recruitment of one capped plus-strand for each genomic segments and polymerase complexes, the polymerase switches mode and catalyzes the synthesis of complementary minus-strands. In Cryphonectria parasitica mycoreovirus 1 (strain 9B21) (CpMYRV-1), this protein is RNA-directed RNA polymerase VP1.